Consider the following 154-residue polypeptide: Immunity protein YwqK (154 aa).

In terms of assembly, probably interacts with cognate toxin YwqJ but not with other non-cognate LXG toxins. The interaction inhibits the toxic activity of YwqJ.

It localises to the cytoplasm. In terms of biological role, immunity component of one of 6 LXG toxin-immunity modules in this strain. They promote kin selection, mediate competition in biofilms, and drive spatial segregation of different strains, indicating that LXG toxins may help avoid warfare between strains in biofilms. Mediates intercellular competition during biofilm formation; disruption of the operon disadvantages the bacteria, but overexpression of the cognate immunity protein restores growth in competition with wild-type. In situ neutralizes the toxic effect of cognate toxin YqcG. Probably neutralizes the ability to inhibit growth of cognate toxin YwqJ. Probably does not have immunity protein activity on other LXG toxins. The chain is Immunity protein YwqK (ywqK) from Bacillus subtilis (strain 168).